We begin with the raw amino-acid sequence, 469 residues long: RuvB-like helicase 2 (469 aa).

Gly74–Thr81 lines the ATP pocket.

This sequence belongs to the RuvB family. In terms of assembly, may form heterododecamers with RVB1. Component of the SWR1 chromatin remodeling complex, the INO80 chromatin remodeling complex, and of the R2TP complex.

It is found in the nucleus. The catalysed reaction is ATP + H2O = ADP + phosphate + H(+). In terms of biological role, DNA helicase which participates in several chromatin remodeling complexes, including the SWR1 and the INO80 complexes. The SWR1 complex mediates the ATP-dependent exchange of histone H2A for the H2A variant HZT1 leading to transcriptional regulation of selected genes by chromatin remodeling. The INO80 complex remodels chromatin by shifting nucleosomes and is involved in DNA repair. Also involved in pre-rRNA processing. The chain is RuvB-like helicase 2 (RVB2) from Eremothecium gossypii (strain ATCC 10895 / CBS 109.51 / FGSC 9923 / NRRL Y-1056) (Yeast).